Consider the following 1972-residue polypeptide: TP53-binding protein 1 (1972 aa).

3 disordered regions span residues 24–273, 290–332, and 346–507; these read DSQP…VAAM, QIQK…CSLA, and GQRS…LGLS. 2 positions are modified to phosphoserine: Ser-25 and Ser-63. Residues 82 to 91 are compositionally biased toward basic and acidic residues; the sequence is EHLKENKVAD. The span at 94-121 shows a compositional bias: polar residues; sequence DSSNLDTCGSISQVIEQLPQPNRTSSVL. Residues Ser-105 and Ser-124 each carry the phosphoserine modification. The span at 138 to 149 shows a compositional bias: basic and acidic residues; the sequence is ELEQKEKEKEED. Over residues 151–168 the composition is skewed to polar residues; that stretch reads SGNTTHSLGAEDTASSQL. Phosphoserine is present on residues Ser-166, Ser-176, and Ser-178. The segment covering 195–205 has biased composition (polar residues); that stretch reads LQSVTTNSGYT. Lys-217 is covalently cross-linked (Glycyl lysine isopeptide (Lys-Gly) (interchain with G-Cter in SUMO1); alternate). A Glycyl lysine isopeptide (Lys-Gly) (interchain with G-Cter in SUMO2); alternate cross-link involves residue Lys-217. 3 positions are modified to phosphoserine: Ser-222, Ser-265, and Ser-294. Composition is skewed to polar residues over residues 300–322 and 346–361; these read LSTQEDLFDQSNKTVSSDGCSTP and GQRSLVQDSLSTNSSD. Thr-302 is modified (phosphothreonine). Phosphoserine occurs at positions 366, 380, 395, 398, 429, 452, and 464. Residues 426 to 441 are compositionally biased toward polar residues; it reads STVSPQASTPISQSTP. A compositionally biased stretch (pro residues) spans 442–452; it reads VFPPGSLPIPS. Over residues 481–490 the composition is skewed to polar residues; that stretch reads HSSSLTVECS. The span at 491–501 shows a compositional bias: basic and acidic residues; that stretch reads KTSEIEPKNSP. Ser-500, Ser-507, Ser-518, Ser-523, and Ser-525 each carry phosphoserine. Residues 520–531 are compositionally biased toward polar residues; that stretch reads SEYSQSPKMESL. Residues 520 to 556 are disordered; sequence SEYSQSPKMESLSSHRIDEDGENTQIEDTEPMSPVLN. Positions 538 to 549 are enriched in acidic residues; that stretch reads EDGENTQIEDTE. A phosphothreonine mark is found at Thr-543 and Thr-548. Phosphoserine is present on residues Ser-552, Ser-566, and Ser-580. The tract at residues 568 to 595 is disordered; sequence LMNPAQDGEVQLSQNDDKTKGDDTDTRD. A compositionally biased stretch (basic and acidic residues) spans 582–595; that stretch reads NDDKTKGDDTDTRD. Phosphoserine is present on residues Ser-630, Ser-635, Ser-639, and Ser-640. The segment at 649-687 is disordered; it reads EIKEHHPEEGSSGSEVEEIPETPCESQGEELKEENMESV. Thr-670 bears the Phosphothreonine mark. 8 positions are modified to phosphoserine: Ser-692, Ser-724, Ser-727, Ser-771, Ser-809, Ser-830, Ser-831, and Ser-834. Positions 742–911 are disordered; the sequence is EQEAWEEATS…TPFHFTLPKE (170 aa). Basic and acidic residues predominate over residues 798–816; the sequence is AENRLDTKEEKSVEYEGDL. Residues 839-848 show a composition bias toward basic and acidic residues; that stretch reads RADDPLRLDQ. Residues 849–864 show a composition bias toward polar residues; the sequence is ELQQPQTQEKTSNSLT. Thr-855 is subject to Phosphothreonine. A Glycyl lysine isopeptide (Lys-Gly) (interchain with G-Cter in SUMO1); alternate cross-link involves residue Lys-868. A Glycyl lysine isopeptide (Lys-Gly) (interchain with G-Cter in SUMO2); alternate cross-link involves residue Lys-868. The segment covering 890 to 902 has biased composition (polar residues); that stretch reads HASQSFCESSSET. Position 922 is a phosphothreonine (Thr-922). Lys-930 participates in a covalent cross-link: Glycyl lysine isopeptide (Lys-Gly) (interchain with G-Cter in SUMO2). Ser-970 and Ser-975 each carry phosphoserine. Lys-984 is covalently cross-linked (Glycyl lysine isopeptide (Lys-Gly) (interchain with G-Cter in SUMO2)). 2 disordered regions span residues 997 to 1028 and 1045 to 1103; these read EASEESLQFNLEKPATGERKNGSTAVAESVAS and ENEA…VSPA. Residues 1018–1028 are compositionally biased toward polar residues; the sequence is GSTAVAESVAS. At Ser-1028 the chain carries Phosphoserine. At Thr-1056 the chain carries Phosphothreonine. Ser-1068 is modified (phosphoserine). The segment covering 1071–1083 has biased composition (basic and acidic residues); it reads EEEKEKLEGDHTI. A phosphoserine mark is found at Ser-1086, Ser-1094, Ser-1101, and Ser-1114. Residues 1127–1139 are compositionally biased toward basic and acidic residues; the sequence is DQKEGRSTNKENP. 3 disordered regions span residues 1127–1148, 1188–1232, and 1269–1478; these read DQKEGRSTNKENPSKALIERPS, NFGK…QPPH, and VTEE…DGLD. The residue at position 1148 (Ser-1148) is a Phosphoserine. Residues 1188-1200 show a composition bias toward polar residues; the sequence is NFGKQDATVQTER. Position 1214 is a phosphothreonine (Thr-1214). A phosphoserine mark is found at Ser-1216 and Ser-1219. Residues 1272 to 1285 show a composition bias toward acidic residues; sequence ETEEPIVECQECET. Composition is skewed to low complexity over residues 1298–1307 and 1316–1329; these read DLGDISSFSS and SSGTSLSAMHSSGS. A phosphoserine mark is found at Ser-1317 and Ser-1342. Residue Arg-1355 is modified to Omega-N-methylarginine. Ser-1362 bears the Phosphoserine mark. A Glycyl lysine isopeptide (Lys-Gly) (interchain with G-Cter in SUMO2) cross-link involves residue Lys-1365. A Phosphoserine modification is found at Ser-1368. Residue Thr-1372 is modified to Phosphothreonine. The short motif at 1396 to 1403 is the GAR element; that stretch reads RGRGRRGR. Phosphoserine is present on residues Ser-1426 and Ser-1430. A Glycyl lysine isopeptide (Lys-Gly) (interchain with G-Cter in SUMO1); alternate cross-link involves residue Lys-1434. Lys-1434 is covalently cross-linked (Glycyl lysine isopeptide (Lys-Gly) (interchain with G-Cter in SUMO2); alternate). 3 positions are modified to phosphoserine: Ser-1460, Ser-1462, and Ser-1474. The segment at 1484–1603 is tudor-like; sequence NSFVGLRVVA…NRLREQYGLG (120 aa). Positions 1495–1523 are interaction with dimethylated histone H4; that stretch reads WSSNGYFYSGKITRDVGAGKYKLLFDDGY. Residue Lys-1563 forms a Glycyl lysine isopeptide (Lys-Gly) (interchain with G-Cter in SUMO1); alternate linkage. A Glycyl lysine isopeptide (Lys-Gly) (interchain with G-Cter in SUMO2); alternate cross-link involves residue Lys-1563. The UDR signature appears at 1604–1631; sequence PYEAVTPLTKAADISLDNLVEGKRKRRS. Position 1609 is a phosphothreonine (Thr-1609). 3 positions are modified to phosphoserine: Ser-1618, Ser-1631, and Ser-1635. Disordered stretches follow at residues 1622–1719 and 1745–1768; these read LVEG…EEQR and LASRSKLPDGPTGSSEEEEEFLEI. A compositionally biased stretch (low complexity) spans 1634-1650; sequence SSPATPTASSSSSTTPT. Residues Thr-1638 and Thr-1648 each carry the phosphothreonine modification. Phosphoserine occurs at positions 1656, 1673, and 1678. A Glycyl lysine isopeptide (Lys-Gly) (interchain with G-Cter in ubiquitin) cross-link involves residue Lys-1685. 3 positions are modified to phosphoserine: Ser-1701, Ser-1759, and Ser-1778. BRCT domains lie at 1724-1848 and 1864-1964; these read LNKT…NYLL and PREN…QHPK.

In terms of assembly, homoligomer. Interacts with p53/TP53 (via the central domain). Interacts with DCLRE1C. Interacts with histone H2AX and this requires phosphorylation of H2AX on 'Ser-139'. Interacts with histone H4 that has been dimethylated at 'Lys-20' (H4K20me2). Has low affinity for histone H4 containing monomethylated 'Lys-20' (H4K20me1). Does not bind histone H4 containing unmethylated or trimethylated 'Lys-20' (H4K20me3). Has low affinity for histone H3 that has been dimethylated on 'Lys-79'. Has very low affinity for histone H3 that has been monomethylated on 'Lys-79' (in vitro). Does not bind unmethylated histone H3. Interacts with histone H2A monoubiquitinated at 'Lys-15' (H2AK15Ub). Interacts with PWWP3A/EXPAND1. Interacts with CHEK2; modulates CHEK2 phosphorylation at 'Thr-68' in response to infrared. Interacts with MSL1; this interaction may be required for MSL1 DNA repair activity, but not for histone acetyltransferase activity. Interacts (when phosphorylated by ATM) with RIF1. Interacts (via the Tudor-like domain) with NUDT16L1/TIRR; interaction masks the Tudor-like domain and prevents recruitment to chromatin. Interacts with PAXIP1. Interacts with SHLD2. Interacts (when phosphorylated) with TOPBP1. Interacts with GFI1; promoting methylation by PRMT1. Interacts with (phosphorylated) DYNLL1; specifically binds DYNLL1 phosphorylated at 'Ser-88' and promotes its recruitment to double stand breaks (DSBs). (Microbial infection) Interacts (via C-terminus) with Epstein-Barr virus lytic switch protein BZLF1 (via C-terminus); this interaction is involved in the activation of the viral lytic cycle. Asymmetrically dimethylated on Arg residues by PRMT1. Methylation is required for DNA binding. In terms of processing, phosphorylated at basal level in the absence of DNA damage. Phosphorylated by ATM in response to DNA damage: phosphorylation at different sites promotes interaction with different set of proteins: phosphorylation at the N-terminus by ATM (residues from 6-178) promotes interaction with PAXIP1 and non-homologous end joining (NHEJ) of dysfunctional telomeres. Phosphorylation by ATM at residues that are located more C-terminus (residues 300-650) leads to promote interaction with RIF1. Interaction with RIF1 leads to disrupt interaction with NUDT16L1/TIRR. Phosphorylation at Thr-1609 and Ser-1618 in the UDR motif blocks interaction with H2AK15ub. Dephosphorylated by PPP4C. Hyperphosphorylation during mitosis correlates with its exclusion from chromatin and DNA lesions. Hyperphosphorylated in an ATR-dependent manner in response to DNA damage induced by UV irradiation. Dephosphorylated by PPP5C. Phosphorylation at Ser-366 and Thr-670 promotes interaction with TOPBP1. Phosphorylated by VRK1. Post-translationally, monoubiquitinated at Lys-1685 by MSL2 is reponse to DNA damage, leading to its stabilization.

The protein localises to the nucleus. The protein resides in the chromosome. It localises to the centromere. It is found in the kinetochore. Functionally, double-strand break (DSB) repair protein involved in response to DNA damage, telomere dynamics and class-switch recombination (CSR) during antibody genesis. Plays a key role in the repair of double-strand DNA breaks (DSBs) in response to DNA damage by promoting non-homologous end joining (NHEJ)-mediated repair of DSBs and specifically counteracting the function of the homologous recombination (HR) repair protein BRCA1. In response to DSBs, phosphorylation by ATM promotes interaction with RIF1 and dissociation from NUDT16L1/TIRR, leading to recruitment to DSBs sites. Recruited to DSBs sites by recognizing and binding histone H2A monoubiquitinated at 'Lys-15' (H2AK15Ub) and histone H4 dimethylated at 'Lys-20' (H4K20me2), two histone marks that are present at DSBs sites. Required for immunoglobulin class-switch recombination (CSR) during antibody genesis, a process that involves the generation of DNA DSBs. Participates in the repair and the orientation of the broken DNA ends during CSR. In contrast, it is not required for classic NHEJ and V(D)J recombination. Promotes NHEJ of dysfunctional telomeres via interaction with PAXIP1. This is TP53-binding protein 1 from Homo sapiens (Human).